The following is an 88-amino-acid chain: Small ribosomal subunit protein uS15 (88 aa).

This sequence belongs to the universal ribosomal protein uS15 family. As to quaternary structure, part of the 30S ribosomal subunit. Forms a bridge to the 50S subunit in the 70S ribosome, contacting the 23S rRNA.

Functionally, one of the primary rRNA binding proteins, it binds directly to 16S rRNA where it helps nucleate assembly of the platform of the 30S subunit by binding and bridging several RNA helices of the 16S rRNA. Its function is as follows. Forms an intersubunit bridge (bridge B4) with the 23S rRNA of the 50S subunit in the ribosome. This Borrelia garinii subsp. bavariensis (strain ATCC BAA-2496 / DSM 23469 / PBi) (Borreliella bavariensis) protein is Small ribosomal subunit protein uS15.